The primary structure comprises 584 residues: MESVNKCGKSASTRNCTVKMSRKMWVLSLLALAALQLHSGSEVAAHLNVFLNPVEVMRLLGVSAEVYYVREGHINNYALNFIVPVPANVKDISFTWQSLAGRGLPYSINVVSSDQEVLPRPAINVSHSGEIPTTIQTWSIALKCSGLKAAEVDVTVSLEVVLNRSLNNVTHLVFRRKKICLMNDSAEDLSEDVDDPQLLETVMLPPTGLITLVVGVSVAMGSVCLLLMIAYCVKGAANKRQHHQHGGQPMRTSSFQRLNTHPPCQSSMGSAAYMTPSIIAPIHGSSLPRKVPVSVEQQHPEELHRRISELTVERCRVRLSSLLQEGTFGRVYRGTYNDTQDVLVKTVAQHASQMQVLLLLQEGMLLYGASHPGILSVLGVSIEDHTTPFVLYPALNNTRNLKQFLLDPACARTVTTIQIVMMASQLSMALDHLHSHGVVHKDIATRNCVIDDQLRVKLSDSSLSRDLFPSDYNCLGDSENRPVKWMSLEALQHKQFSEASDSWAFGVLMWELCTSAKQPYAEVDPFEMEHYLKDGYRLAQPFNCPDELFTIMAYCWALLPAERPTFAQLQSCLSEFYSQITRYV.

The N-terminal stretch at 1-40 (MESVNKCGKSASTRNCTVKMSRKMWVLSLLALAALQLHSG) is a signal peptide. Over 41–208 (SEVAAHLNVF…LETVMLPPTG (168 aa)) the chain is Extracellular. The WIF domain maps to 49–180 (VFLNPVEVMR…HLVFRRKKIC (132 aa)). Asparagine 124, asparagine 163, asparagine 168, and asparagine 183 each carry an N-linked (GlcNAc...) asparagine glycan. The chain crosses the membrane as a helical span at residues 209–229 (LITLVVGVSVAMGSVCLLLMI). At 230–584 (AYCVKGAANK…EFYSQITRYV (355 aa)) the chain is on the cytoplasmic side. The tract at residues 241-261 (QHHQHGGQPMRTSSFQRLNTH) is disordered. Residues 250–261 (MRTSSFQRLNTH) are compositionally biased toward polar residues. The Protein kinase domain maps to 317–577 (VRLSSLLQEG…QLQSCLSEFY (261 aa)). ATP contacts are provided by residues 323–331 (LQEGTFGRV) and lysine 345. Residue aspartate 442 is the Proton acceptor of the active site. Tyrosine 472 is modified (phosphotyrosine; by autocatalysis).

The protein belongs to the protein kinase superfamily. Tyr protein kinase family. In terms of tissue distribution, expressed in dynamic domains in the embryonic epidermis, many of which border on sites of epithelial invagination into the embryo interior, including ventral furrow, cephalic furrow, fore- and hindgut, optic lobe and tracheal pits. Later in embryogenesis, expression is seen in imaginal tissues.

The protein localises to the cell membrane. The enzyme catalyses L-tyrosyl-[protein] + ATP = O-phospho-L-tyrosyl-[protein] + ADP + H(+). May play an essential role in neuronal pathway recognition and ventral muscle attachment site selection. The sequence is that of Tyrosine-protein kinase Dnt (dnt) from Drosophila melanogaster (Fruit fly).